The chain runs to 413 residues: MSDFIFTSESVTEGHPDKICDQISDAVLDALLTEDPESRVACETVVNTGLCLLTGEITSKAKVDYIKLVRNVIKEIGYEGYRAGGFDANSCAVLVALDEQSPDISQGVNEADDVNDDLEDNTGAGDQGIMFGYACDETPELMPLPISLAHRLAIQLSKVRHENMLNYLLPDGKTQVSIDYKNGVPLSINTILISTQHNPEIDGITNEEEIRQRIKEDLWKNVVLPATEDLEIKPNIQTTRFLVNPTGKFVVGGPQGDAGLTGRKIIVDTYGGYARHGGGAFSGKDPTKVDRSAAYAARYVAKSIVKAKLAKKAEVQLSYAIGVAKPISILVETFDTGVISQANLTELINKYFDLRPAAIIKEFDLRNLPQKMGGTFFRKTASYGHFGRRDLDLPWEKVEEKAAQLAEASKVFL.

Position 15 (H15) interacts with ATP. Residue D17 coordinates Mg(2+). E43 is a K(+) binding site. L-methionine contacts are provided by E56 and Q100. The tract at residues Q100–E110 is flexible loop. Residues D171 to K173, K248 to F249, D257, R263 to K264, A280, and K284 contribute to the ATP site. D257 is an L-methionine binding site. K288 serves as a coordination point for L-methionine.

The protein belongs to the AdoMet synthase family. In terms of assembly, homotetramer; dimer of dimers. The cofactor is Mg(2+). K(+) is required as a cofactor.

It is found in the cytoplasm. The enzyme catalyses L-methionine + ATP + H2O = S-adenosyl-L-methionine + phosphate + diphosphate. The protein operates within amino-acid biosynthesis; S-adenosyl-L-methionine biosynthesis; S-adenosyl-L-methionine from L-methionine: step 1/1. Its function is as follows. Catalyzes the formation of S-adenosylmethionine (AdoMet) from methionine and ATP. The overall synthetic reaction is composed of two sequential steps, AdoMet formation and the subsequent tripolyphosphate hydrolysis which occurs prior to release of AdoMet from the enzyme. The polypeptide is S-adenosylmethionine synthase (Prochlorococcus marinus (strain AS9601)).